Reading from the N-terminus, the 103-residue chain is Large ribosomal subunit protein uL24 (103 aa).

This sequence belongs to the universal ribosomal protein uL24 family. In terms of assembly, part of the 50S ribosomal subunit.

One of two assembly initiator proteins, it binds directly to the 5'-end of the 23S rRNA, where it nucleates assembly of the 50S subunit. Functionally, one of the proteins that surrounds the polypeptide exit tunnel on the outside of the subunit. This Bacillus cytotoxicus (strain DSM 22905 / CIP 110041 / 391-98 / NVH 391-98) protein is Large ribosomal subunit protein uL24.